Consider the following 748-residue polypeptide: Formate acetyltransferase (748 aa).

A PFL domain is found at 5-618 (NNHTNAWQGF…KTGNTPDGRK (614 aa)). C412 functions as the S-acetylcysteine intermediate in the catalytic mechanism. The Cysteine radical intermediate role is filled by C413. Residues 625-748 (PGANPMHGRD…VISRTFHESM (124 aa)) form the Glycine radical domain. The residue at position 723 (G723) is a Glycine radical.

The protein belongs to the glycyl radical enzyme (GRE) family. PFL subfamily. In terms of assembly, homodimer.

The protein localises to the cytoplasm. It carries out the reaction formate + acetyl-CoA = pyruvate + CoA. It functions in the pathway fermentation; pyruvate fermentation; formate from pyruvate: step 1/1. In terms of biological role, catalyzes the conversion of pyruvate to formate and acetyl-CoA. In Staphylococcus epidermidis (strain ATCC 35984 / DSM 28319 / BCRC 17069 / CCUG 31568 / BM 3577 / RP62A), this protein is Formate acetyltransferase (pflB).